We begin with the raw amino-acid sequence, 154 residues long: 3-hydroxyacyl-[acyl-carrier-protein] dehydratase FabZ (154 aa).

Histidine 59 is an active-site residue.

It belongs to the thioester dehydratase family. FabZ subfamily.

The protein resides in the cytoplasm. The catalysed reaction is a (3R)-hydroxyacyl-[ACP] = a (2E)-enoyl-[ACP] + H2O. In terms of biological role, involved in unsaturated fatty acids biosynthesis. Catalyzes the dehydration of short chain beta-hydroxyacyl-ACPs and long chain saturated and unsaturated beta-hydroxyacyl-ACPs. In Bartonella bacilliformis (strain ATCC 35685 / KC583 / Herrer 020/F12,63), this protein is 3-hydroxyacyl-[acyl-carrier-protein] dehydratase FabZ.